The chain runs to 147 residues: MRTFTPKPSDTERTWYVIDATDVVLGRLASQVAKLLRGKHKATFAPHVDTGDFVIVVNADKVALTGNKEQQKLAYRHSGYPGGLKATSYAELLEKRPERAVEKAIRGMVPKNSLGRAQMRKLKVYAGAEHPHGAQKPQTFEITQIAQ.

It belongs to the universal ribosomal protein uL13 family. In terms of assembly, part of the 50S ribosomal subunit.

Its function is as follows. This protein is one of the early assembly proteins of the 50S ribosomal subunit, although it is not seen to bind rRNA by itself. It is important during the early stages of 50S assembly. This Beutenbergia cavernae (strain ATCC BAA-8 / DSM 12333 / CCUG 43141 / JCM 11478 / NBRC 16432 / NCIMB 13614 / HKI 0122) protein is Large ribosomal subunit protein uL13.